We begin with the raw amino-acid sequence, 423 residues long: Glucose-1-phosphate adenylyltransferase (423 aa).

Alpha-D-glucose 1-phosphate-binding positions include Tyr-108, Gly-173, Glu-188 to Lys-189, and Ser-207.

This sequence belongs to the bacterial/plant glucose-1-phosphate adenylyltransferase family. As to quaternary structure, homotetramer.

It catalyses the reaction alpha-D-glucose 1-phosphate + ATP + H(+) = ADP-alpha-D-glucose + diphosphate. It participates in glycan biosynthesis; glycogen biosynthesis. Its function is as follows. Involved in the biosynthesis of ADP-glucose, a building block required for the elongation reactions to produce glycogen. Catalyzes the reaction between ATP and alpha-D-glucose 1-phosphate (G1P) to produce pyrophosphate and ADP-Glc. The sequence is that of Glucose-1-phosphate adenylyltransferase from Francisella tularensis subsp. mediasiatica (strain FSC147).